A 1469-amino-acid chain; its full sequence is Protein BCL9 homolog (1469 aa).

A compositionally biased stretch (polar residues) spans 1-16; sequence MLSTTMPRSPTQQQPQ. 5 disordered regions span residues 1–131, 161–187, 200–222, 422–442, and 454–474; these read MLST…NVSA, SNKAKGQAAGGGCETGSTSSLTVKEEP, EERENHSPTMSPVGFGSIGNAQD, ENSKRSTVSAPSNSFVDQSDP, and GGSSNTSRSGQNSRNHVDSIS. Serine 9 carries the phosphoserine modification. Position 11 is a phosphothreonine (threonine 11). Residues 17–34 are compositionally biased toward low complexity; that stretch reads PNSDASSTSASGSNPGAA. Composition is skewed to polar residues over residues 40-60 and 90-113; these read SAASRSSPKTLNSEPFSTLSP and SGNNLPEGQTMLRQNSTSTINSCL. Residues 116–130 show a composition bias toward low complexity; that stretch reads SPQNSSEHSNSSNVS. Position 206 is a phosphoserine (serine 206). Threonine 208 carries the phosphothreonine modification. Residue serine 210 is modified to Phosphoserine. Polar residues-rich tracts occupy residues 422-438 and 455-474; these read ENSKRSTVSAPSNSFVD and GSSNTSRSGQNSRNHVDSIS. Positions 511 to 555 are ARM-binding; that stretch reads SLQGVKVPDENLTPQQRQHREEQLAKIKKMNQFLFPENENSVGAN. Disordered stretches follow at residues 728–830, 844–913, and 961–991; these read GGKP…TSTV, CFQA…RSPV, and QASAQGGSVQFSRRSDNIPLNPNSGNRPPPN. The span at 731 to 745 shows a compositional bias: low complexity; it reads PRQVTGTVVPQQQTP. The span at 770–781 shows a compositional bias: polar residues; it reads IQRSASVPIATQ. The span at 782 to 796 shows a compositional bias: low complexity; the sequence is SPNPSSPNNLSLPSP. Composition is skewed to polar residues over residues 806–830 and 844–880; these read PTNSPSMDGTGSLSGSVPQANTSTV and CFQADTPSPSNQNRSRNTGSSSVLTHNLSSNPSTPLS. 3 positions are modified to phosphoserine: serine 883, serine 905, and serine 911. The segment covering 904-913 has biased composition (polar residues); the sequence is PSPQGQRSPV.

The protein belongs to the BCL9 family. As to quaternary structure, binds to ARM and PYGO.

It localises to the nucleus. In terms of biological role, involved in signal transduction through the Wnt pathway. The polypeptide is Protein BCL9 homolog (lgs) (Drosophila melanogaster (Fruit fly)).